A 466-amino-acid polypeptide reads, in one-letter code: Zinc finger protein NUTCRACKER (466 aa).

Positions 1 to 23 (MTSEVLQTISSGSGFAQPQSSST) are enriched in polar residues. Positions 1 to 29 (MTSEVLQTISSGSGFAQPQSSSTLDHDES) are disordered. The residue at position 56 (serine 56) is a Phosphoserine. The C2H2-type 1 zinc-finger motif lies at 66 to 88 (FLCEVCGKGFQRDQNLQLHRRGH). Threonine 98 is subject to Phosphothreonine; by KIN10. The C2H2-type 2 zinc-finger motif lies at 107 to 137 (YVCPEKTCVHHHSSRALGDLTGIKKHFCRKH). The short motif at 134 to 141 (CRKHGEKK) is the Nuclear localization signal element. Residues 142–165 (WTCEKCAKRYAVQSDWKAHSKTCG) form a C2H2-type 2; degenerate zinc finger. Zn(2+) is bound by residues cysteine 144, cysteine 147, histidine 160, cysteine 164, cysteine 171, and cysteine 173. The segment at 169–192 (YRCDCGTIFSRRDSFITHRAFCDA) adopts a CCHC-type 2; atypical zinc-finger fold. Residues serine 178 and serine 182 each carry the phosphoserine; by KIN10 modification. Positions 179 to 191 (RRDSFITHRAFCD) are SHR-binding. Histidine 186 and cysteine 190 together coordinate Zn(2+).

In terms of assembly, interacts with AKIN10. Inhibition of transcription factor activity by KIN10-mediated phosphorylation at Thr-98, Ser-178 and Ser-182 under sugar deprivation conditions, thus delaying flowering. Highly expressed in vegetative organs and at lower levels in flowers and siliques. Expressed predominantly in roots. In roots, present in cortex, endodermis, and pericycle layer.

The protein resides in the nucleus. In terms of biological role, transcription activator that binds to the DNA sequence 5'-CTTTTGTCC-3'. Regulates photoperiodic flowering by modulating sugar transport and metabolism. Regulates SUS1 and SUS4. Transcription factor that regulates tissue boundaries and asymmetric cell division. Contributes to the sequestration of 'SHORT-ROOT' to the nucleus. The polypeptide is Zinc finger protein NUTCRACKER (Arabidopsis thaliana (Mouse-ear cress)).